The sequence spans 148 residues: Trypsin inhibitor CMe (148 aa).

The first 24 residues, 1–24, serve as a signal peptide directing secretion; the sequence is MAFKYQLLLSAAVMLAILVATATS.

The protein belongs to the protease inhibitor I6 (cereal trypsin/alpha-amylase inhibitor) family. Five disulfide bonds, which are essential for the inhibitor activity, are probably present. As to expression, expressed in the developing endosperm. Not detected in embryo, aleurone, coleoptile, roots and leaves.

The protein localises to the secreted. Inhibits trypsin in vitro. Probably plays a protective role through inhibition of insect midgut proteases. The protein is Trypsin inhibitor CMe (ITR1) of Hordeum vulgare (Barley).